Reading from the N-terminus, the 325-residue chain is Hydroxymethylglutaryl-CoA lyase, mitochondrial (325 aa).

The N-terminal 27 residues, 1–27 (MASVRKAFPRRLVGLTSLRAVSTSSMG), are a transit peptide targeting the mitochondrion. One can recognise a Pyruvate carboxyltransferase domain in the interval 33-300 (VKIVEVGPRD…HTGVNLQKLL (268 aa)). Arg41 serves as a coordination point for substrate. Asp42 provides a ligand contact to a divalent metal cation. Lys48 bears the N6-acetyllysine; alternate mark. At Lys48 the chain carries N6-succinyllysine; alternate. Lys111 bears the N6-acetyllysine mark. 2 positions are modified to N6-acetyllysine; alternate: Lys137 and Lys179. N6-succinyllysine; alternate occurs at positions 137 and 179. His233 and His235 together coordinate a divalent metal cation. Cys266 is a catalytic residue. Asn275 contacts a divalent metal cation. A Microbody targeting signal motif is present at residues 323 to 325 (CKL). At Lys324 the chain carries N6-acetyllysine.

It belongs to the HMG-CoA lyase family. As to quaternary structure, homodimer; disulfide-linked. Can also form homotetramers.

Its subcellular location is the mitochondrion matrix. The protein resides in the peroxisome. The enzyme catalyses (3S)-3-hydroxy-3-methylglutaryl-CoA = acetoacetate + acetyl-CoA. It functions in the pathway metabolic intermediate metabolism; (S)-3-hydroxy-3-methylglutaryl-CoA degradation; acetoacetate from (S)-3-hydroxy-3-methylglutaryl-CoA: step 1/1. Its function is as follows. Mitochondrial 3-hydroxy-3-methylglutaryl-CoA lyase that catalyzes a cation-dependent cleavage of (S)-3-hydroxy-3-methylglutaryl-CoA into acetyl-CoA and acetoacetate, a key step in ketogenesis. Terminal step in leucine catabolism. Ketone bodies (beta-hydroxybutyrate, acetoacetate and acetone) are essential as an alternative source of energy to glucose, as lipid precursors and as regulators of metabolism. This is Hydroxymethylglutaryl-CoA lyase, mitochondrial (Hmgcl) from Mus musculus (Mouse).